The sequence spans 438 residues: Methylenetetrahydrofolate--tRNA-(uracil-5-)-methyltransferase TrmFO (438 aa).

10 to 15 (GGGLAG) serves as a coordination point for FAD.

The protein belongs to the MnmG family. TrmFO subfamily. Requires FAD as cofactor.

It is found in the cytoplasm. It carries out the reaction uridine(54) in tRNA + (6R)-5,10-methylene-5,6,7,8-tetrahydrofolate + NADH + H(+) = 5-methyluridine(54) in tRNA + (6S)-5,6,7,8-tetrahydrofolate + NAD(+). The enzyme catalyses uridine(54) in tRNA + (6R)-5,10-methylene-5,6,7,8-tetrahydrofolate + NADPH + H(+) = 5-methyluridine(54) in tRNA + (6S)-5,6,7,8-tetrahydrofolate + NADP(+). Catalyzes the folate-dependent formation of 5-methyl-uridine at position 54 (M-5-U54) in all tRNAs. This chain is Methylenetetrahydrofolate--tRNA-(uracil-5-)-methyltransferase TrmFO, found in Trichormus variabilis (strain ATCC 29413 / PCC 7937) (Anabaena variabilis).